Here is a 358-residue protein sequence, read N- to C-terminus: MKQIQVDLGVRSYPIYIGQNLMSDGETLSRYLLKKRILIVTNETVAPLYLKQIQETMASFGEVESVILPDGEQFKDLAHLDTIFTALLQQNYGRDSVLVALGGGVIGDMTGFAAACYQRGIDFIQIPTTLLSQVDSSVGGKTAVNHPLGKNMIGAFYQPQIVLIDTLCLHTLPAREFAAGMAEVIKYGIMWDADFFQWLEDNVTALKTLDAQALVYAISRCCEIKADVVSQDETEQGVRALLNLGHTFGHAIEAEMGYGNWLHGEAVSAGTVLAAQTAKALGLIDESIVCRIIQLLQAFDLPVSAPESMDFDSFIQHMRRDKKVLGGQIRLVLPTAIGRADVFSQVTESTLEQVIRCA.

Residues 70–75, 104–108, 128–129, Lys-141, Lys-150, and 168–171 contribute to the NAD(+) site; these read DGEQFK, GVIGD, TT, and CLHT. 3 residues coordinate Zn(2+): Glu-183, His-246, and His-263.

This sequence belongs to the sugar phosphate cyclases superfamily. Dehydroquinate synthase family. The cofactor is Co(2+). Zn(2+) serves as cofactor. It depends on NAD(+) as a cofactor.

It localises to the cytoplasm. The enzyme catalyses 7-phospho-2-dehydro-3-deoxy-D-arabino-heptonate = 3-dehydroquinate + phosphate. Its pathway is metabolic intermediate biosynthesis; chorismate biosynthesis; chorismate from D-erythrose 4-phosphate and phosphoenolpyruvate: step 2/7. Catalyzes the conversion of 3-deoxy-D-arabino-heptulosonate 7-phosphate (DAHP) to dehydroquinate (DHQ). The sequence is that of 3-dehydroquinate synthase from Shewanella baltica (strain OS195).